A 400-amino-acid polypeptide reads, in one-letter code: Deoxyguanosinetriphosphate triphosphohydrolase-like protein (400 aa).

The region spanning 73 to 215 (RLTHSIEVSQ…AAIADDIAYN (143 aa)) is the HD domain.

Belongs to the dGTPase family. Type 2 subfamily.

The protein is Deoxyguanosinetriphosphate triphosphohydrolase-like protein of Bartonella henselae (strain ATCC 49882 / DSM 28221 / CCUG 30454 / Houston 1) (Rochalimaea henselae).